Reading from the N-terminus, the 198-residue chain is MSEIATMAQGEAGAIGPGRLVLVVGPSGAGKDTLLQLAQAACIDDHDVVFPRRVVTRESSAAEDNIAMSPDEFRRGIDHGDFAVHWDAHGHSYALPLEINDDIRAGRAVVVNVSRTVIAALRQAYANVVVVAITAPPDVLAQRLAARARHSDGNIAERLSRSVEDASAQADVTILNAGSADYHSRQLVRVIRNESWRE.

Gly-25–Asp-32 contacts ATP.

Belongs to the ribose 1,5-bisphosphokinase family.

The enzyme catalyses alpha-D-ribose 1,5-bisphosphate + ATP = 5-phospho-alpha-D-ribose 1-diphosphate + ADP. The protein operates within metabolic intermediate biosynthesis; 5-phospho-alpha-D-ribose 1-diphosphate biosynthesis; 5-phospho-alpha-D-ribose 1-diphosphate from D-ribose 5-phosphate (route II): step 3/3. Catalyzes the phosphorylation of ribose 1,5-bisphosphate to 5-phospho-D-ribosyl alpha-1-diphosphate (PRPP). This is Ribose 1,5-bisphosphate phosphokinase PhnN from Bradyrhizobium diazoefficiens (strain JCM 10833 / BCRC 13528 / IAM 13628 / NBRC 14792 / USDA 110).